The chain runs to 423 residues: Gamma-glutamyl phosphate reductase (423 aa).

Belongs to the gamma-glutamyl phosphate reductase family.

It is found in the cytoplasm. The catalysed reaction is L-glutamate 5-semialdehyde + phosphate + NADP(+) = L-glutamyl 5-phosphate + NADPH + H(+). It participates in amino-acid biosynthesis; L-proline biosynthesis; L-glutamate 5-semialdehyde from L-glutamate: step 2/2. Catalyzes the NADPH-dependent reduction of L-glutamate 5-phosphate into L-glutamate 5-semialdehyde and phosphate. The product spontaneously undergoes cyclization to form 1-pyrroline-5-carboxylate. The polypeptide is Gamma-glutamyl phosphate reductase (Burkholderia thailandensis (strain ATCC 700388 / DSM 13276 / CCUG 48851 / CIP 106301 / E264)).